The sequence spans 56 residues: Large ribosomal subunit protein bL33 (56 aa).

The protein belongs to the bacterial ribosomal protein bL33 family.

This chain is Large ribosomal subunit protein bL33, found in Halorhodospira halophila (strain DSM 244 / SL1) (Ectothiorhodospira halophila (strain DSM 244 / SL1)).